The chain runs to 299 residues: Cytosolic sulfotransferase 1 (299 aa).

51-56 (KAGTTW) is a 3'-phosphoadenylyl sulfate binding site. The active-site Proton acceptor is the His-113. 3'-phosphoadenylyl sulfate-binding positions include Arg-135, Ser-143, Tyr-199, 233–238 (VQFDAM), and 261–263 (RKG).

Belongs to the sulfotransferase 1 family. In terms of tissue distribution, expressed in liver.

The protein localises to the cytoplasm. Its activity is regulated as follows. Inhibited by Co(2+), Zn(2+), Cd(2+) and Pb(2+) ions. Inactivated by Hg(2+) and Cu(2+) ions. Functionally, sulfotransferase that utilizes 3'-phospho-5'-adenylyl sulfate (PAPS) as sulfonate donor to catalyze the sulfate conjugation of a variety of xenobiotic and endogenous compounds, including 2-naphthol, hydroxychlorobiphenyls, dopamine and T3 (triiodo-L-thyronine). This Danio rerio (Zebrafish) protein is Cytosolic sulfotransferase 1.